We begin with the raw amino-acid sequence, 130 residues long: UPF0251 protein MmarC5_0986 (130 aa).

It belongs to the UPF0251 family.

This Methanococcus maripaludis (strain C5 / ATCC BAA-1333) protein is UPF0251 protein MmarC5_0986.